The following is a 238-amino-acid chain: Orotidine 5'-phosphate decarboxylase (238 aa).

Substrate contacts are provided by residues Asp-10, Lys-32, 59-68 (DLKLHDIPNT), Thr-122, Arg-184, Gln-193, Gly-213, and Arg-214. Residue Lys-61 is the Proton donor of the active site.

This sequence belongs to the OMP decarboxylase family. Type 1 subfamily. Homodimer.

It carries out the reaction orotidine 5'-phosphate + H(+) = UMP + CO2. It participates in pyrimidine metabolism; UMP biosynthesis via de novo pathway; UMP from orotate: step 2/2. Catalyzes the decarboxylation of orotidine 5'-monophosphate (OMP) to uridine 5'-monophosphate (UMP). The protein is Orotidine 5'-phosphate decarboxylase of Bacillus cereus (strain G9842).